Consider the following 467-residue polypeptide: ATP-dependent protease ATPase subunit HslU (467 aa).

ATP contacts are provided by residues V22 and 64-69; that span reads GVGKTE. Residues 149-192 form a disordered region; that stretch reads QTNNPLESLFGGAIPNFGQNNEDEEEPPTEEIKTKRSEIKRQLE. Over residues 178–192 the composition is skewed to basic and acidic residues; sequence EEIKTKRSEIKRQLE. D280, E345, and R417 together coordinate ATP.

It belongs to the ClpX chaperone family. HslU subfamily. A double ring-shaped homohexamer of HslV is capped on each side by a ring-shaped HslU homohexamer. The assembly of the HslU/HslV complex is dependent on binding of ATP.

It is found in the cytoplasm. Functionally, ATPase subunit of a proteasome-like degradation complex; this subunit has chaperone activity. The binding of ATP and its subsequent hydrolysis by HslU are essential for unfolding of protein substrates subsequently hydrolyzed by HslV. HslU recognizes the N-terminal part of its protein substrates and unfolds these before they are guided to HslV for hydrolysis. The protein is ATP-dependent protease ATPase subunit HslU of Staphylococcus aureus (strain MW2).